The sequence spans 526 residues: Biotin carboxylase 2, chloroplastic (526 aa).

The N-terminal 71 residues, 1-71 (MEATLPVCKS…GVTCRAEKIL (71 aa)), are a transit peptide targeting the chloroplast. ATP is bound by residues lysine 181, 213 to 274 (ASEI…PRHI), lysine 223, 229 to 230 (GG), 265 to 268 (EKYV), and histidine 273. An ATP-grasp domain is found at 185–382 (RETMKKANVP…LIEEQIRVAM (198 aa)). Lysine 302 is a binding site for hydrogencarbonate. Glutamate 340 and glutamate 353 together coordinate ATP. Glutamate 340, glutamate 353, and asparagine 355 together coordinate Mg(2+). Positions 340, 353, and 355 each coordinate Mn(2+). 3 residues coordinate hydrogencarbonate: arginine 357, valine 360, and arginine 403. Arginine 357 is an active-site residue. Residue arginine 403 participates in biotin binding.

As to quaternary structure, acetyl-CoA carboxylase is a heterohexamer composed of biotin carboxyl carrier protein, biotin carboxylase and two subunits each of ACCase subunit alpha and ACCase plastid-coded subunit beta (accD). Mg(2+) is required as a cofactor. It depends on Mn(2+) as a cofactor.

Its subcellular location is the plastid. The protein localises to the chloroplast. The catalysed reaction is N(6)-biotinyl-L-lysyl-[protein] + hydrogencarbonate + ATP = N(6)-carboxybiotinyl-L-lysyl-[protein] + ADP + phosphate + H(+). It functions in the pathway lipid metabolism; malonyl-CoA biosynthesis; malonyl-CoA from acetyl-CoA: step 1/1. Its function is as follows. This protein is a component of the acetyl coenzyme A carboxylase complex; first, biotin carboxylase catalyzes the carboxylation of the carrier protein and then the transcarboxylase transfers the carboxyl group to form malonyl-CoA. The sequence is that of Biotin carboxylase 2, chloroplastic from Populus trichocarpa (Western balsam poplar).